A 230-amino-acid polypeptide reads, in one-letter code: Androgen-dependent TFPI-regulating protein (230 aa).

Topologically, residues 1 to 7 (MTKTTTC) are cytoplasmic. The chain crosses the membrane as a helical span at residues 8-28 (LYHFVVLNWYIFLNYYIPQIG). Over 29 to 45 (KDEEKLKEFHDGGRSKY) the chain is Extracellular. The chain crosses the membrane as a helical span at residues 46–66 (LTLLNLLLQAVFFGVACLDDV). Residues 67 to 85 (LKRVIGRKDIKFITYFRDL) lie on the Cytoplasmic side of the membrane. A helical transmembrane segment spans residues 86 to 106 (LFTTLAFPLSTFVFLVFWSLF). The Extracellular portion of the chain corresponds to 107 to 120 (HYDRSLVYPKGLDD). The helical transmembrane segment at 121–141 (FFPAWVNHAMHTSIFPFSLAE) threads the bilayer. Topologically, residues 142 to 155 (TVLRPHNYPSKKLG) are cytoplasmic. Residues 156–173 (LSLLGACNFAYIIRILWR) form a helical membrane-spanning segment. The Extracellular segment spans residues 174-190 (YVQTGNWVYPVFASLSP). Residues 191 to 211 (LGIILFFSASYILSASLYLFG) traverse the membrane as a helical segment. At 212-230 (EKINHWKWGATVKPRMKKN) the chain is on the cytoplasmic side.

It belongs to the AIG1 family.

It localises to the cell membrane. The enzyme catalyses 9-hexadecanoyloxy-octadecanoate + H2O = 9-hydroxy-octadecanoate + hexadecanoate + H(+). It catalyses the reaction 12-hexadecanoyloxy-octadecanoate + H2O = 12-hydroxyoctadecanoate + hexadecanoate + H(+). The catalysed reaction is 9-(9Z-hexadecenoyloxy)-octadecanoate + H2O = (9Z)-hexadecenoate + 9-hydroxy-octadecanoate + H(+). It carries out the reaction 12-(9Z-hexadecenoyloxy)-octadecanoate + H2O = 12-hydroxyoctadecanoate + (9Z)-hexadecenoate + H(+). The enzyme catalyses 13-(9Z-hexadecenoyloxy)-octadecanoate + H2O = 13-hydroxy-octadecanoate + (9Z)-hexadecenoate + H(+). It catalyses the reaction 9-octadecanoyloxy-octadecanoate + H2O = 9-hydroxy-octadecanoate + octadecanoate + H(+). The catalysed reaction is 12-octadecanoyloxy-octadecanoate + H2O = 12-hydroxyoctadecanoate + octadecanoate + H(+). It carries out the reaction 13-octadecanoyloxy-octadecanoate + H2O = 13-hydroxy-octadecanoate + octadecanoate + H(+). The enzyme catalyses 9-(9Z-octadecenoyloxy)-octadecanoate + H2O = 9-hydroxy-octadecanoate + (9Z)-octadecenoate + H(+). It catalyses the reaction 12-(9Z-octadecenoyloxy)-octadecanoate + H2O = 12-hydroxyoctadecanoate + (9Z)-octadecenoate + H(+). The catalysed reaction is 13-(9Z-octadecenoyloxy)-octadecanoate + H2O = 13-hydroxy-octadecanoate + (9Z)-octadecenoate + H(+). It carries out the reaction 5-(9Z-octadecenoyloxy)-octadecanoate + H2O = 5-hydroxy-octadecanoate + (9Z)-octadecenoate + H(+). Hydrolyzes bioactive fatty-acid esters of hydroxy-fatty acids (FAHFAs), but not other major classes of lipids. Shows a preference for FAHFAs with branching distal from the carboxylate head group of the lipids. Regulates the expression and the cell-associated anticoagulant activity of the inhibitor TFPI in endothelial cells (in vitro). The chain is Androgen-dependent TFPI-regulating protein (Adtrp) from Rattus norvegicus (Rat).